A 118-amino-acid polypeptide reads, in one-letter code: NADH-quinone oxidoreductase subunit A 2 (118 aa).

3 helical membrane passes run 5–25 (YLPI…SLVF), 60–80 (FYII…LYPW), and 87–107 (LGMF…VGYI).

The protein belongs to the complex I subunit 3 family. In terms of assembly, NDH-1 is composed of 14 different subunits. Subunits NuoA, H, J, K, L, M, N constitute the membrane sector of the complex.

The protein localises to the cell inner membrane. The enzyme catalyses a quinone + NADH + 5 H(+)(in) = a quinol + NAD(+) + 4 H(+)(out). In terms of biological role, NDH-1 shuttles electrons from NADH, via FMN and iron-sulfur (Fe-S) centers, to quinones in the respiratory chain. The immediate electron acceptor for the enzyme in this species is believed to be ubiquinone. Couples the redox reaction to proton translocation (for every two electrons transferred, four hydrogen ions are translocated across the cytoplasmic membrane), and thus conserves the redox energy in a proton gradient. In Geobacter metallireducens (strain ATCC 53774 / DSM 7210 / GS-15), this protein is NADH-quinone oxidoreductase subunit A 2.